The primary structure comprises 136 residues: Large-conductance mechanosensitive channel (136 aa).

Helical transmembrane passes span 9–29 (AFASRGNVIDMAVGIIIGAAF) and 79–99 (IQTIIDFTIIAFAIFMGVKAI).

It belongs to the MscL family. Homopentamer.

It is found in the cell inner membrane. In terms of biological role, channel that opens in response to stretch forces in the membrane lipid bilayer. May participate in the regulation of osmotic pressure changes within the cell. In Shewanella baltica (strain OS223), this protein is Large-conductance mechanosensitive channel.